The primary structure comprises 162 residues: MLEEENSQMICQIYRIYTKDISFEAPGAPQIFQKEGSPDIKLDLDTSSNLLAENTHEVVLRITLTATIEGQTSFLCEVQQAGIFFIKNIENMQLKHCLGAYCPNILFPYARECISNLVSKGSFPHLHLEPINFDSLFMNYVQQEAEKQNESDPIIIKNSEQD.

It belongs to the SecB family. In terms of assembly, homotetramer, a dimer of dimers. One homotetramer interacts with 1 SecA dimer.

The protein localises to the cytoplasm. One of the proteins required for the normal export of preproteins out of the cell cytoplasm. It is a molecular chaperone that binds to a subset of precursor proteins, maintaining them in a translocation-competent state. It also specifically binds to its receptor SecA. The protein is Protein-export protein SecB of Hamiltonella defensa subsp. Acyrthosiphon pisum (strain 5AT).